Consider the following 391-residue polypeptide: Formate-dependent phosphoribosylglycinamide formyltransferase (391 aa).

N(1)-(5-phospho-beta-D-ribosyl)glycinamide is bound by residues 20–21 (EL) and Glu80. ATP contacts are provided by residues Arg112, Lys153, 158–163 (SSGKGQ), 193–196 (EGFI), and Glu201. The ATP-grasp domain occupies 117-306 (RLAAEELDLS…EFALHVRAFT (190 aa)). Mg(2+) is bound by residues Glu265 and Glu277. N(1)-(5-phospho-beta-D-ribosyl)glycinamide contacts are provided by residues Asp284, Lys354, and 361 to 362 (RR).

Belongs to the PurK/PurT family. As to quaternary structure, homodimer.

It catalyses the reaction N(1)-(5-phospho-beta-D-ribosyl)glycinamide + formate + ATP = N(2)-formyl-N(1)-(5-phospho-beta-D-ribosyl)glycinamide + ADP + phosphate + H(+). Its pathway is purine metabolism; IMP biosynthesis via de novo pathway; N(2)-formyl-N(1)-(5-phospho-D-ribosyl)glycinamide from N(1)-(5-phospho-D-ribosyl)glycinamide (formate route): step 1/1. Functionally, involved in the de novo purine biosynthesis. Catalyzes the transfer of formate to 5-phospho-ribosyl-glycinamide (GAR), producing 5-phospho-ribosyl-N-formylglycinamide (FGAR). Formate is provided by PurU via hydrolysis of 10-formyl-tetrahydrofolate. In Vibrio parahaemolyticus serotype O3:K6 (strain RIMD 2210633), this protein is Formate-dependent phosphoribosylglycinamide formyltransferase.